Here is a 344-residue protein sequence, read N- to C-terminus: Anthranilate phosphoribosyltransferase (344 aa).

Residues Gly-81, 84–85, Ser-89, 91–94, 109–117, and Ala-121 contribute to the 5-phospho-alpha-D-ribose 1-diphosphate site; these read GD, NIST, and KHGNRALSS. Position 81 (Gly-81) interacts with anthranilate. Ser-93 contacts Mg(2+). Asn-112 contributes to the anthranilate binding site. Position 167 (Arg-167) interacts with anthranilate. Mg(2+) is bound by residues Asp-226 and Glu-227.

It belongs to the anthranilate phosphoribosyltransferase family. In terms of assembly, homodimer. The cofactor is Mg(2+).

The catalysed reaction is N-(5-phospho-beta-D-ribosyl)anthranilate + diphosphate = 5-phospho-alpha-D-ribose 1-diphosphate + anthranilate. The protein operates within amino-acid biosynthesis; L-tryptophan biosynthesis; L-tryptophan from chorismate: step 2/5. Functionally, catalyzes the transfer of the phosphoribosyl group of 5-phosphorylribose-1-pyrophosphate (PRPP) to anthranilate to yield N-(5'-phosphoribosyl)-anthranilate (PRA). The polypeptide is Anthranilate phosphoribosyltransferase (Azorhizobium caulinodans (strain ATCC 43989 / DSM 5975 / JCM 20966 / LMG 6465 / NBRC 14845 / NCIMB 13405 / ORS 571)).